A 143-amino-acid chain; its full sequence is Spanin, inner membrane subunit (143 aa).

The Cytoplasmic segment spans residues 1–7; it reads MLEFLRK. A helical; Signal-anchor for type II membrane protein membrane pass occupies residues 8–24; the sequence is LIPWVLAGMLFGLGWHL. Residues 25–143 lie on the Periplasmic side of the membrane; sequence GSDSMDAKWK…QDTIRELQRK (119 aa).

The protein belongs to the T7likevirus i-spanin family. As to quaternary structure, interacts (via C-terminus) with the spanin outer lipoprotein subunit (o-spanin) (via C-terminus). Part of the spanin complex which spans the entire periplasmic space. The spanin complex is composed of spanin inner membrane subunit and spanin outer membrane subunit.

The protein resides in the host cell inner membrane. In terms of biological role, component of the spanin complex that disrupts the host outer membrane and participates in cell lysis during virus exit. The spanin complex conducts the final step in host lysis by disrupting the outer membrane after holin and endolysin action have permeabilized the inner membrane and degraded the host peptidoglycans. Host outer membrane disruption is possibly due to local fusion between the inner and outer membrane performed by the spanin complex. The chain is Spanin, inner membrane subunit from Escherichia coli (Bacteriophage T7).